The sequence spans 325 residues: RNA ligase 1 (325 aa).

Mg(2+) serves as cofactor. Mn(2+) is required as a cofactor. AMPylates itself (auto-AMPylation).

It catalyses the reaction ATP + (ribonucleotide)n-3'-hydroxyl + 5'-phospho-(ribonucleotide)m = (ribonucleotide)n+m + AMP + diphosphate.. Functions as an RNA ligase, in vitro. The ligation reaction entails three nucleotidyl transfer steps. In the first step, the RNA ligase reacts with ATP in the absence of nucleic acid to form a covalent ligase-AMP intermediate and release pyrophosphate. In step 2, the ligase-AMP binds to the nucleic acid and transfers the adenylate to the 5'-PO4 terminus to form an adenylylated intermediate. In step 3, the RNA ligase directs the attack of the 3'-OH on the 5'-phosphoanhydride linkage, resulting in a repaired 3'-5' phosphodiester and release of AMP. Exhibits selectivity for single-stranded RNA substrates and may not have nick-sealing activity on double-stranded DNA-RNA hybrids. May play a role in maintaining RNA integrity under stress conditions, for example in response to reactive oxygen species (ROS). This is RNA ligase 1 from Rattus norvegicus (Rat).